A 150-amino-acid polypeptide reads, in one-letter code: Large ribosomal subunit protein bL9 (150 aa).

It belongs to the bacterial ribosomal protein bL9 family.

Functionally, binds to the 23S rRNA. The polypeptide is Large ribosomal subunit protein bL9 (Latilactobacillus sakei subsp. sakei (strain 23K) (Lactobacillus sakei subsp. sakei)).